Consider the following 350-residue polypeptide: Small ribosomal subunit biogenesis GTPase RsgA (350 aa).

Residues 1 to 17 (MSKNKLSKGQQRRVNAN) are compositionally biased toward polar residues. The interval 1–33 (MSKNKLSKGQQRRVNANHQRRLKTSKEKPDYDD) is disordered. The CP-type G domain occupies 104–273 (TSVLTRPDFY…VIDSPGVREF (170 aa)). GTP-binding positions include 160–163 (NKID) and 214–222 (GQSGVGKSS). Positions 297, 302, 304, and 310 each coordinate Zn(2+).

It belongs to the TRAFAC class YlqF/YawG GTPase family. RsgA subfamily. As to quaternary structure, monomer. Associates with 30S ribosomal subunit, binds 16S rRNA. Requires Zn(2+) as cofactor.

Its subcellular location is the cytoplasm. In terms of biological role, one of several proteins that assist in the late maturation steps of the functional core of the 30S ribosomal subunit. Helps release RbfA from mature subunits. May play a role in the assembly of ribosomal proteins into the subunit. Circularly permuted GTPase that catalyzes slow GTP hydrolysis, GTPase activity is stimulated by the 30S ribosomal subunit. In Escherichia coli (strain ATCC 8739 / DSM 1576 / NBRC 3972 / NCIMB 8545 / WDCM 00012 / Crooks), this protein is Small ribosomal subunit biogenesis GTPase RsgA.